The primary structure comprises 505 residues: Protein nucleotidyltransferase YdiU (505 aa).

ATP is bound by residues Gly102, Gly104, Arg105, Lys125, Asp137, Gly138, Arg188, and Arg195. Catalysis depends on Asp264, which acts as the Proton acceptor. 2 residues coordinate Mg(2+): Asn265 and Asp274. An ATP-binding site is contributed by Asp274.

This sequence belongs to the SELO family. It depends on Mg(2+) as a cofactor. Requires Mn(2+) as cofactor.

The catalysed reaction is L-seryl-[protein] + ATP = 3-O-(5'-adenylyl)-L-seryl-[protein] + diphosphate. It carries out the reaction L-threonyl-[protein] + ATP = 3-O-(5'-adenylyl)-L-threonyl-[protein] + diphosphate. The enzyme catalyses L-tyrosyl-[protein] + ATP = O-(5'-adenylyl)-L-tyrosyl-[protein] + diphosphate. It catalyses the reaction L-histidyl-[protein] + UTP = N(tele)-(5'-uridylyl)-L-histidyl-[protein] + diphosphate. The catalysed reaction is L-seryl-[protein] + UTP = O-(5'-uridylyl)-L-seryl-[protein] + diphosphate. It carries out the reaction L-tyrosyl-[protein] + UTP = O-(5'-uridylyl)-L-tyrosyl-[protein] + diphosphate. Its function is as follows. Nucleotidyltransferase involved in the post-translational modification of proteins. It can catalyze the addition of adenosine monophosphate (AMP) or uridine monophosphate (UMP) to a protein, resulting in modifications known as AMPylation and UMPylation. The chain is Protein nucleotidyltransferase YdiU from Nitrobacter winogradskyi (strain ATCC 25391 / DSM 10237 / CIP 104748 / NCIMB 11846 / Nb-255).